A 394-amino-acid polypeptide reads, in one-letter code: Subtilisin-like protease CPC735_005570 (394 aa).

Positions 1–21 (MRAIISVALFLSLSLLSAVNA) are cleaved as a signal peptide. Residues 22-114 (AEILSAGDTD…IEHDRIANAR (93 aa)) constitute a propeptide that is removed on maturation. Residues 37-110 (SYIVVMRDGL…AVKYIEHDRI (74 aa)) enclose the Inhibitor I9 domain. The Peptidase S8 domain occupies 123–394 (GWNLARISHK…RLLLYNGSGR (272 aa)). Residues Asp-155 and His-186 each act as charge relay system in the active site. N-linked (GlcNAc...) asparagine glycans are attached at residues Asn-216 and Asn-247. Ser-340 functions as the Charge relay system in the catalytic mechanism. 2 N-linked (GlcNAc...) asparagine glycosylation sites follow: Asn-382 and Asn-390.

It belongs to the peptidase S8 family.

It is found in the secreted. Functionally, secreted subtilisin-like serine protease with keratinolytic activity that contributes to pathogenicity. This is Subtilisin-like protease CPC735_005570 from Coccidioides posadasii (strain C735) (Valley fever fungus).